A 99-amino-acid polypeptide reads, in one-letter code: DNA-binding protein HU (99 aa).

The disordered stretch occupies residues 67 to 86; it reads REGRNPKTGAKMKIDAYNQP.

It belongs to the bacterial histone-like protein family. In terms of assembly, homodimer.

Its function is as follows. Histone-like DNA-binding protein which is capable of wrapping DNA to stabilize it, and thus to prevent its denaturation under extreme environmental conditions. This chain is DNA-binding protein HU (hup), found in Rickettsia felis (strain ATCC VR-1525 / URRWXCal2) (Rickettsia azadi).